The primary structure comprises 332 residues: L-lactate dehydrogenase A chain (332 aa).

NAD(+)-binding positions include 29-57 (GAVG…VEDK) and Arg-99. Substrate is bound by residues Arg-106, Asn-138, and Arg-169. Asn-138 is a binding site for NAD(+). Residue His-193 is the Proton acceptor of the active site. Thr-248 provides a ligand contact to substrate.

This sequence belongs to the LDH/MDH superfamily. LDH family. In terms of assembly, homotetramer.

Its subcellular location is the cytoplasm. It catalyses the reaction (S)-lactate + NAD(+) = pyruvate + NADH + H(+). It functions in the pathway fermentation; pyruvate fermentation to lactate; (S)-lactate from pyruvate: step 1/1. Functionally, interconverts simultaneously and stereospecifically pyruvate and lactate with concomitant interconversion of NADH and NAD(+). The protein is L-lactate dehydrogenase A chain (LDHA) of Python regius (Ball python).